The chain runs to 168 residues: Ribonuclease H (168 aa).

An RNase H type-1 domain is found at 10-151; it reads NNIPVKIYTD…ADKLATNGKI (142 aa). Mg(2+) is bound by residues D19, E57, D79, and D143.

It belongs to the RNase H family. As to quaternary structure, monomer. Mg(2+) serves as cofactor.

It localises to the cytoplasm. The catalysed reaction is Endonucleolytic cleavage to 5'-phosphomonoester.. Its function is as follows. Endonuclease that specifically degrades the RNA of RNA-DNA hybrids. The polypeptide is Ribonuclease H (Orientia tsutsugamushi (strain Boryong) (Rickettsia tsutsugamushi)).